The following is a 162-amino-acid chain: Transcription antitermination protein RfaH (162 aa).

It belongs to the RfaH family. In terms of assembly, interacts with both the nontemplate DNA and the RNA polymerase (RNAP).

Its function is as follows. Enhances distal genes transcription elongation in a specialized subset of operons that encode extracytoplasmic components. RfaH is recruited into a multi-component RNA polymerase complex by the ops element, which is a short conserved DNA sequence located downstream of the main promoter of these operons. Once bound, RfaH suppresses pausing and inhibits Rho-dependent and intrinsic termination at a subset of sites. Termination signals are bypassed, which allows complete synthesis of long RNA chains. Also negatively controls expression and surface presentation of AG43 and possibly another AG43-independent factor that mediates cell-cell interactions and biofilm formation,. This is Transcription antitermination protein RfaH from Escherichia coli O6:K15:H31 (strain 536 / UPEC).